Consider the following 83-residue polypeptide: Cytochrome b559 subunit alpha (83 aa).

Residues 21–35 (VIHSITIPSLFIAGW) traverse the membrane as a helical segment. His-23 lines the heme pocket.

It belongs to the PsbE/PsbF family. As to quaternary structure, heterodimer of an alpha subunit and a beta subunit. PSII is composed of 1 copy each of membrane proteins PsbA, PsbB, PsbC, PsbD, PsbE, PsbF, PsbH, PsbI, PsbJ, PsbK, PsbL, PsbM, PsbT, PsbX, PsbY, PsbZ, Psb30/Ycf12, at least 3 peripheral proteins of the oxygen-evolving complex and a large number of cofactors. It forms dimeric complexes. The cofactor is heme b.

The protein resides in the plastid. It is found in the chloroplast thylakoid membrane. Functionally, this b-type cytochrome is tightly associated with the reaction center of photosystem II (PSII). PSII is a light-driven water:plastoquinone oxidoreductase that uses light energy to abstract electrons from H(2)O, generating O(2) and a proton gradient subsequently used for ATP formation. It consists of a core antenna complex that captures photons, and an electron transfer chain that converts photonic excitation into a charge separation. The chain is Cytochrome b559 subunit alpha from Mesembryanthemum crystallinum (Common ice plant).